We begin with the raw amino-acid sequence, 108 residues long: Phosphoribosyl-AMP cyclohydrolase (108 aa).

Asp72 lines the Mg(2+) pocket. Cys73 contributes to the Zn(2+) binding site. The Mg(2+) site is built by Asp74 and Asp76. Zn(2+)-binding residues include Cys89 and Cys96.

The protein belongs to the PRA-CH family. Homodimer. Requires Mg(2+) as cofactor. Zn(2+) serves as cofactor.

It is found in the cytoplasm. The catalysed reaction is 1-(5-phospho-beta-D-ribosyl)-5'-AMP + H2O = 1-(5-phospho-beta-D-ribosyl)-5-[(5-phospho-beta-D-ribosylamino)methylideneamino]imidazole-4-carboxamide. The protein operates within amino-acid biosynthesis; L-histidine biosynthesis; L-histidine from 5-phospho-alpha-D-ribose 1-diphosphate: step 3/9. Its function is as follows. Catalyzes the hydrolysis of the adenine ring of phosphoribosyl-AMP. This is Phosphoribosyl-AMP cyclohydrolase from Archaeoglobus fulgidus (strain ATCC 49558 / DSM 4304 / JCM 9628 / NBRC 100126 / VC-16).